A 531-amino-acid chain; its full sequence is GPI alpha-1,2-mannosyltransferase 3 (531 aa).

N-linked (GlcNAc...) asparagine glycosylation occurs at N84. 3 consecutive transmembrane segments (helical) span residues 99–119, 124–144, and 174–196; these read GLRGFSYPLMFAAIYKVLYLL, VWFLIWIPRLAQAVLSGIADV, and YCATRTLTNTMEAVLSTFALYYY. N204 is a glycosylation site (N-linked (GlcNAc...) asparagine). A run of 6 helical transmembrane segments spans residues 210–230, 249–269, 303–323, 328–348, 350–370, and 375–395; these read LICVALAFLIRPTAVILWIPL, YLPIGILTLAASLTVDRIFFG, GVPVILCTHLPFFIHGCMVTP, ILLVAVAWTVLTYSALSHKEF, FIYPVLPVCMVFCGFSFSNLK, and AAVGFLVLSNLFPALYTGLIH. N-linked (GlcNAc...) asparagine glycosylation is found at N414 and N476.

This sequence belongs to the glycosyltransferase 22 family. PIGB subfamily.

It is found in the endoplasmic reticulum membrane. Its pathway is glycolipid biosynthesis; glycosylphosphatidylinositol-anchor biosynthesis. Its function is as follows. Alpha-1,2-mannosyltransferase that catalyzes the transfer of the third mannose, via an alpha-1,2 bond, from a dolichol-phosphate-mannose (Dol-P-Man) to an alpha-D-Man-(1-&gt;6)-2-PEtn-alpha-D-Man-(1-&gt;4)-alpha-D-GlcN-(1-&gt;6)-(1-radyl,2-acyl-sn-glycero-3-phospho)-2-acyl-inositol intermediate to generate an alpha-D-Man-(1-&gt;2)-alpha-D-Man-(1-&gt;6)-2-PEtn-alpha-D-Man-(1-&gt;4)-alpha-D-GlcN-(1-&gt;6)-(1-radyl,2-acyl-sn-glycero-3-phospho)-2-acyl-inositol (also termed H6) and participates in the nineth step of the glycosylphosphatidylinositol-anchor biosynthesis. May also add the third mannose to an alpha-D-Man-(1-&gt;6)-alpha-D-Man-(1-&gt;4)-alpha-D-GlcN-(1-&gt;6)-(1-radyl,2-acyl-sn-glycero-3-phospho)-2-acyl-inositol (also termed H3) intermediate generating an alpha-D-Man-(1-&gt;2)-alpha-D-Man-(1-&gt;6)-alpha-D-Man-(1-&gt;4)-alpha-D-GlcN-(1-&gt;6)-(1-radyl,2-acyl-sn-glycero-3-phospho)-2-acyl-inositol (also termed H4). This is GPI alpha-1,2-mannosyltransferase 3 from Xenopus laevis (African clawed frog).